The sequence spans 292 residues: MFNRIFLFLLTNLAVLMLAGIVMSLLGVNPAQMSGLLVMAAIFGFGGSFISLLLSKFMAKRSTGAQVITEPRTPTERWLLETVRRQAQAAGIGMPEVAVYEGPEINAFATGANRNNALVAVSTGLLQNMDQDEAEAVLGHEIAHVANGDMVTMALLQGVLNTFVIVLARVVGGIIDSTLSGNREGGRGFAYYIIVFALEMVFGLFATMIAMWFSRRREFRADAGGAQLAGRSKMIAALERLSLNHGQNTLPSQVQAFGISGGVGEGLRRLFLSHPPLTERIAALRAASGSAR.

Helical transmembrane passes span 5 to 25 and 34 to 54; these read IFLF…VMSL and SGLL…SLLL. His140 is a Zn(2+) binding site. Glu141 is a catalytic residue. Zn(2+) is bound at residue His144. The next 2 helical transmembrane spans lie at 155-175 and 193-213; these read LLQG…GGII and IIVF…AMWF. Glu218 contributes to the Zn(2+) binding site.

This sequence belongs to the peptidase M48B family. The cofactor is Zn(2+).

It localises to the cell inner membrane. In Xanthomonas axonopodis pv. citri (strain 306), this protein is Protease HtpX.